Consider the following 1242-residue polypeptide: Membrane-associated phosphatidylinositol transfer protein 1 (1242 aa).

3 positions are modified to phosphothreonine: Thr-59, Thr-282, and Thr-287. The interval 259–330 (CNTGSEGPEA…HGGGVSPQSL (72 aa)) is disordered. A compositionally biased stretch (polar residues) spans 272–282 (GKPSTETQPGT). Residues 299-319 (ASPDASFGKQWSSSSRSSYSS) show a composition bias toward low complexity. Ser-300, Ser-304, Ser-319, Ser-326, Ser-329, Ser-342, Ser-345, Ser-346, and Ser-373 each carry phosphoserine. Ser-382 bears the Phosphoserine; by CDK1 mark. Residues 581 to 593 (AGTGSRGSSRRGS) are compositionally biased toward low complexity. Residues 581–678 (AGTGSRGSSR…PASSEAPDGP (98 aa)) form a disordered region. Phosphoserine occurs at positions 593, 600, and 621. A compositionally biased stretch (polar residues) spans 643-656 (GSQNSLQVAPTVTS). Residues 684–878 (LDFKVSGFFL…VAFILRQVIE (195 aa)) form the DDHD domain. A Phosphoserine modification is found at Ser-894. The tract at residues 1207–1242 (RSRGPSQVDLEGPGTPPTTLARGKTRSISLKLDSEE) is disordered. Arg-1209 is modified (omega-N-methylarginine). Ser-1235 is subject to Phosphoserine.

The protein belongs to the PtdIns transfer protein family. PI transfer class IIA subfamily. In terms of assembly, interacts with PIK4CA and VAPB. Interacts with PTK2B via its C-terminus. Interacts with RHOA. Has higher affinity for the inactive, GDP-bound form of RHOA. The CDK1-phosphorylated form interacts with PLK1. In terms of processing, phosphorylated on multiple sites by CDK1 at the onset of mitosis. Phosphorylation facilitates dissociation from the Golgi complex and is required for interaction with PLK1. Phosphorylated on threonine residues upon treatment with oleic acid. Post-translationally, phosphorylated on tyrosine residues by PTK2B.

Its subcellular location is the cytoplasm. The protein localises to the golgi apparatus. It localises to the golgi stack membrane. The protein resides in the endoplasmic reticulum membrane. It is found in the lipid droplet. Its subcellular location is the cleavage furrow. The protein localises to the midbody. It carries out the reaction a 1,2-diacyl-sn-glycero-3-phospho-(1D-myo-inositol)(in) = a 1,2-diacyl-sn-glycero-3-phospho-(1D-myo-inositol)(out). Functionally, catalyzes the transfer of phosphatidylinositol (PI) between membranes. Binds PI, phosphatidylcholine (PC) and phosphatidic acid (PA) with the binding affinity order of PI &gt; PA &gt; PC. Regulates RHOA activity, and plays a role in cytoskeleton remodeling. Necessary for normal completion of cytokinesis. Plays a role in maintaining normal diacylglycerol levels in the Golgi apparatus. Necessary for maintaining the normal structure of the endoplasmic reticulum and the Golgi apparatus. Required for protein export from the endoplasmic reticulum and the Golgi. Binds calcium ions. The polypeptide is Membrane-associated phosphatidylinositol transfer protein 1 (Pitpnm1) (Rattus norvegicus (Rat)).